The sequence spans 439 residues: MSDNIYSVSQLNSAARQMLEGNFCQIWLTGEISNFTQPVSGHWYLTLKDENAQVRCAMFRMKNLRVAFRPQNGMQVLVRANVSLYEPRGDYQLIIDSMHPAGEGLLQQQFEALKMKLAAEGLFAQNLKKTLPHFSKAVGIITSSTGAALQDILHILARRDPSLKVVIYPTAVQGKEATAEIVQMIELANARQEVDVLIVGRGGGSLEDLWCFNEEEVARAIFRSTLPIISAVGHETDVTIADFVADLRAPTPSAAAELVSRNQDELLQQLRHQQQRLDMAFDRLFTRKSQRLKQLALRLQNQHPQNQLRAQQAKNEQLTHRLQLAILRQFENTQQKFTALSVRLKQNPLPYRIQRYQQGLEQLKVRLNFCVNRQVTERQNKLATLCGKLDGLSPLKVLARGYSIAENPQGKAIVSVKDVNQGDFITTQVADGKIVSKVL.

This sequence belongs to the XseA family. In terms of assembly, heterooligomer composed of large and small subunits.

It localises to the cytoplasm. It carries out the reaction Exonucleolytic cleavage in either 5'- to 3'- or 3'- to 5'-direction to yield nucleoside 5'-phosphates.. In terms of biological role, bidirectionally degrades single-stranded DNA into large acid-insoluble oligonucleotides, which are then degraded further into small acid-soluble oligonucleotides. This chain is Exodeoxyribonuclease 7 large subunit, found in Haemophilus influenzae (strain ATCC 51907 / DSM 11121 / KW20 / Rd).